We begin with the raw amino-acid sequence, 229 residues long: MITQEHYCALPAPKIRTLKHLRTFEVTLDKHGLGPVAGVDEAGRGSCCGPITIAACIMPQRPIAQLQALTDSKKLSAAKRAELYPLIKKYALAWSIIHISAAEIDREGIQHANIFGMRRAIEKLDVAPGYVLTDAMKVPGLRCPSLPIIGGDAAVRCIAAASVLAKHSRDLIMDDLGGKYPEYGLEDHKGYGTKSHMDAVRHHGATPEHRYSYSNVKAAHDQWLQEKTQ.

An RNase H type-2 domain is found at 34 to 225; the sequence is GPVAGVDEAG…VKAAHDQWLQ (192 aa). The a divalent metal cation site is built by Asp-40, Glu-41, and Asp-134.

It belongs to the RNase HII family. The cofactor is Mn(2+). It depends on Mg(2+) as a cofactor.

Its subcellular location is the cytoplasm. The enzyme catalyses Endonucleolytic cleavage to 5'-phosphomonoester.. Endonuclease that specifically degrades the RNA of RNA-DNA hybrids. The sequence is that of Ribonuclease HII from Corynebacterium diphtheriae (strain ATCC 700971 / NCTC 13129 / Biotype gravis).